The following is a 154-amino-acid chain: Snaclec lebecin subunit beta (154 aa).

An N-terminal signal peptide occupies residues 1–23 (MGRIIFVSFGLLVVFLSLSGTGA). Intrachain disulfides connect Cys-25-Cys-36, Cys-53-Cys-150, and Cys-125-Cys-142. In terms of domain architecture, C-type lectin spans 32–151 (DEEHCYYVFF…CGDDYPFVCK (120 aa)). An N-linked (GlcNAc...) asparagine glycan is attached at Asn-139.

As to quaternary structure, heterodimer with the alpha subunit (AC W5XDM0); disulfide-linked. In terms of tissue distribution, expressed by the venom gland.

The protein resides in the secreted. Inhibits human breast cancer cells (MDA-MB231) migration and proliferation, as well as their adhesion to fibrinogen and fibronectin. This inhibition may be due to the binding to receptors of the integrin family, probably alpha-v/beta-3 (ITGAV/ITGB3) (40% inhibition of cell adhesion) and alpha-5/beta-1 (ITGA5/ITGB1) (by comparison with lebectin). In Macrovipera lebetinus (Levantine viper), this protein is Snaclec lebecin subunit beta.